A 566-amino-acid polypeptide reads, in one-letter code: Proline--tRNA ligase (566 aa).

The protein belongs to the class-II aminoacyl-tRNA synthetase family. ProS type 1 subfamily. As to quaternary structure, homodimer.

Its subcellular location is the cytoplasm. It carries out the reaction tRNA(Pro) + L-proline + ATP = L-prolyl-tRNA(Pro) + AMP + diphosphate. Functionally, catalyzes the attachment of proline to tRNA(Pro) in a two-step reaction: proline is first activated by ATP to form Pro-AMP and then transferred to the acceptor end of tRNA(Pro). As ProRS can inadvertently accommodate and process non-cognate amino acids such as alanine and cysteine, to avoid such errors it has two additional distinct editing activities against alanine. One activity is designated as 'pretransfer' editing and involves the tRNA(Pro)-independent hydrolysis of activated Ala-AMP. The other activity is designated 'posttransfer' editing and involves deacylation of mischarged Ala-tRNA(Pro). The misacylated Cys-tRNA(Pro) is not edited by ProRS. The protein is Proline--tRNA ligase of Shouchella clausii (strain KSM-K16) (Alkalihalobacillus clausii).